The primary structure comprises 165 residues: PARP-type zinc finger-containing protein C13F5.07c (165 aa).

The segment at 8–100 (YRIEIAPNNR…KVVDAINEGH (93 aa)) adopts a PARP-type; degenerate zinc-finger fold. The span at 100-114 (HVSESDERESRKLGE) shows a compositional bias: basic and acidic residues. The interval 100–165 (HVSESDERES…TDGSEAYEDD (66 aa)) is disordered. Residues 117 to 128 (NVNSQKLKTSSP) are compositionally biased toward polar residues. Positions 131–141 (VVRKNKRHHTT) are enriched in basic residues. Residues 149 to 165 (SDLDAEFTDGSEAYEDD) are compositionally biased toward acidic residues.

It localises to the cytoplasm. The protein localises to the nucleus. The sequence is that of PARP-type zinc finger-containing protein C13F5.07c from Schizosaccharomyces pombe (strain 972 / ATCC 24843) (Fission yeast).